The sequence spans 306 residues: Ribosomal protein L11 methyltransferase (306 aa).

S-adenosyl-L-methionine-binding residues include Thr-154, Gly-179, Asp-201, and Asn-242.

It belongs to the methyltransferase superfamily. PrmA family.

It localises to the cytoplasm. It catalyses the reaction L-lysyl-[protein] + 3 S-adenosyl-L-methionine = N(6),N(6),N(6)-trimethyl-L-lysyl-[protein] + 3 S-adenosyl-L-homocysteine + 3 H(+). In terms of biological role, methylates ribosomal protein L11. In Stenotrophomonas maltophilia (strain K279a), this protein is Ribosomal protein L11 methyltransferase.